We begin with the raw amino-acid sequence, 109 residues long: Parvalbumin beta (109 aa).

Position 1 is an N-acetylserine (S1). EF-hand domains follow at residues 38 to 73 (KTPDVIKKAFYVIDQDKSGFIEEDELKLFLQNFASS) and 77 to 109 (LTDKETETFLKAGDSDGDGKIGIDEFADLVKEA). Ca(2+) is bound by residues D51, D53, S55, F57, E59, E62, D90, D92, D94, K96, and E101.

This sequence belongs to the parvalbumin family.

Its function is as follows. In muscle, parvalbumin is thought to be involved in relaxation after contraction. It binds two calcium ions. This Opsanus tau (Oyster toadfish) protein is Parvalbumin beta.